The chain runs to 1001 residues: Non-canonical poly(A) RNA polymerase protein Trf4-1 (1001 aa).

Low complexity-rich tracts occupy residues 44-86 (TING…NNSS) and 127-163 (RNST…STNG). Disordered regions lie at residues 44 to 92 (TING…PYLS) and 115 to 238 (QQQQ…AGGA). A compositionally biased stretch (gly residues) spans 164–178 (PGAGTGTSTGAGGTG). The span at 179-216 (TNSPATTASSTAATTTGPATSMSDTSNNPPQSTTTPAS) shows a compositional bias: low complexity. Positions 328 and 330 each coordinate Mn(2+). The PAP-associated domain maps to 458-517 (NLGVLLLEFFELYGRRFNYMKIGISIKNGGRYMPKDELQRDMVDGHRPSLLCIEDPLTPG). Disordered regions lie at residues 631-652 (PTAH…PGAH), 687-740 (QQQQ…AQEV), 767-963 (ASNS…LRGT), and 977-1001 (SSES…RDER). Residues 635–649 (GHSHAHSHSHGHAHP) show a composition bias toward basic residues. 2 stretches are compositionally biased toward low complexity: residues 687–708 (QQQQ…NQSQ) and 768–788 (SNSW…TGSS). Gly residues predominate over residues 827–841 (VGTGSNRGGGDGSGG). Residues 844–854 (YNQRNNHNSSG) show a composition bias toward polar residues. The span at 855–880 (YYHQQYYVPPPMQQQLSKSNSSSNYH) shows a compositional bias: low complexity. Residues 881–912 (QQHHHSHSHGNHSHRQQHHHQQQHHHQQRPQH) are compositionally biased toward basic residues. 2 stretches are compositionally biased toward low complexity: residues 932–955 (SAGN…SNNS) and 977–992 (SSES…SSRS).

It belongs to the DNA polymerase type-B-like family. Mn(2+) serves as cofactor.

The protein localises to the cytoplasm. It catalyses the reaction RNA(n) + ATP = RNA(n)-3'-adenine ribonucleotide + diphosphate. In terms of biological role, involved in a post-transcriptional quality control mechanism limiting inappropriate expression of genetic information. Polyadenylation is required for the degradative activity of the exosome on several of its nuclear RNA substrates. Polyadenylates RNA processing and degradation intermediates of snRNAs and mRNAs. This Drosophila melanogaster (Fruit fly) protein is Non-canonical poly(A) RNA polymerase protein Trf4-1.